The sequence spans 387 residues: tRNA N6-adenosine threonylcarbamoyltransferase (387 aa).

Fe cation is bound by residues histidine 112 and histidine 116. Substrate contacts are provided by residues 134–138 (LASGG), aspartate 167, glycine 180, and asparagine 325. Position 353 (aspartate 353) interacts with Fe cation.

It belongs to the KAE1 / TsaD family. Requires Fe(2+) as cofactor.

It localises to the cytoplasm. It carries out the reaction L-threonylcarbamoyladenylate + adenosine(37) in tRNA = N(6)-L-threonylcarbamoyladenosine(37) in tRNA + AMP + H(+). Required for the formation of a threonylcarbamoyl group on adenosine at position 37 (t(6)A37) in tRNAs that read codons beginning with adenine. Is involved in the transfer of the threonylcarbamoyl moiety of threonylcarbamoyl-AMP (TC-AMP) to the N6 group of A37, together with TsaE and TsaB. TsaD likely plays a direct catalytic role in this reaction. The protein is tRNA N6-adenosine threonylcarbamoyltransferase of Rickettsia prowazekii (strain Madrid E).